Reading from the N-terminus, the 60-residue chain is Ribosome biogenesis protein Nop10 (60 aa).

A disordered region spans residues 37–60 (APAPFDPADPHGKYRRALKERRRL). The segment covering 49-60 (KYRRALKERRRL) has biased composition (basic residues).

It belongs to the NOP10 family.

Involved in ribosome biogenesis; more specifically in 18S rRNA pseudouridylation and in cleavage of pre-rRNA. This is Ribosome biogenesis protein Nop10 from Halobacterium salinarum (strain ATCC 29341 / DSM 671 / R1).